Reading from the N-terminus, the 780-residue chain is ATP-dependent 6-phosphofructokinase, muscle type (780 aa).

Thr-2 carries the post-translational modification N-acetylthreonine. Positions 2-390 (THEEHHAAKT…NWEVYKLLAH (389 aa)) are N-terminal catalytic PFK domain 1. ATP contacts are provided by residues Gly-25, 88–89 (RC), and 118–121 (GDGS). Residue Asp-119 coordinates Mg(2+). Ser-133 carries the phosphoserine modification. Substrate-binding positions include 164–166 (SID), Arg-201, 208–210 (MGR), Glu-264, Arg-292, and 298–301 (HVQR). The Proton acceptor role is filled by Asp-166. The residue at position 377 (Ser-377) is a Phosphoserine. Residues 391–401 (VRPPVSKGGLH) form an interdomain linker region. The segment at 402 to 780 (TVAVMNVGAP…SRKRSGEAAV (379 aa)) is C-terminal regulatory PFK domain 2. Residues Arg-471 and 528–532 (TVSNN) each bind beta-D-fructose 2,6-bisphosphate. O-linked (GlcNAc) serine glycosylation occurs at Ser-530. Lys-557 carries the post-translational modification N6-(2-hydroxyisobutyryl)lysine. Beta-D-fructose 2,6-bisphosphate contacts are provided by residues Arg-566, 573–575 (MGG), Glu-629, Arg-655, and 661–664 (HMQQ). Ser-667 is modified (phosphoserine). Arg-735 lines the beta-D-fructose 2,6-bisphosphate pocket. A Phosphoserine modification is found at Ser-775.

This sequence belongs to the phosphofructokinase type A (PFKA) family. ATP-dependent PFK group I subfamily. Eukaryotic two domain clade 'E' sub-subfamily. As to quaternary structure, homo- and heterotetramers. Phosphofructokinase (PFK) enzyme functions as a tetramer composed of different combinations of 3 types of subunits, called PFKM (M), PFKL (L) and PFKP (P). The composition of the PFK tetramer differs according to the tissue type it is present in. The kinetic and regulatory properties of the tetrameric enzyme are dependent on the subunit composition, hence can vary across tissues. Isoform 2 and isoform 3 interact (via N-terminal testis-specific region) with GSTM5. Isoform 2 and isoform 3 interact (via C-terminus) with HK1 (via N-terminal spermatogenic cell-specific region). The cofactor is Mg(2+). Post-translationally, glcNAcylation decreases enzyme activity. Isoform 1 is expressed in skeletal muscle (at protein level). Isoform 2 and isoform 3 are testis-specific and are detected in quiescent sperm (at protein level). They are first detected in the cytoplasm of round spermatids and subsequently in the flagellum of elongated spermatids extending into the seminiferous tubule lumen (at protein level). Isoform 2 is expressed at higher level than isoform 3 in testis.

The protein localises to the cytoplasm. Its subcellular location is the cell projection. It localises to the cilium. The protein resides in the flagellum. It catalyses the reaction beta-D-fructose 6-phosphate + ATP = beta-D-fructose 1,6-bisphosphate + ADP + H(+). It functions in the pathway carbohydrate degradation; glycolysis; D-glyceraldehyde 3-phosphate and glycerone phosphate from D-glucose: step 3/4. Its activity is regulated as follows. Allosterically activated by ADP, AMP, or fructose 2,6-bisphosphate, and allosterically inhibited by ATP or citrate. Its function is as follows. Catalyzes the phosphorylation of D-fructose 6-phosphate to fructose 1,6-bisphosphate by ATP, the first committing step of glycolysis. The sequence is that of ATP-dependent 6-phosphofructokinase, muscle type (Pfkm) from Mus musculus (Mouse).